Reading from the N-terminus, the 268-residue chain is Phosphonates import ATP-binding protein PhnC (268 aa).

The ABC transporter domain maps to 11–254; that stretch reads LHAEAVTKRF…EVMAIYQRAE (244 aa). ATP is bound at residue 43–50; that stretch reads GLSGSGKS.

The protein belongs to the ABC transporter superfamily. Phosphonates importer (TC 3.A.1.9.1) family. The complex is composed of two ATP-binding proteins (PhnC), two transmembrane proteins (PhnE) and a solute-binding protein (PhnD).

The protein localises to the cell membrane. It catalyses the reaction phosphonate(out) + ATP + H2O = phosphonate(in) + ADP + phosphate + H(+). Part of the ABC transporter complex PhnCDE involved in phosphonates import. Responsible for energy coupling to the transport system. The polypeptide is Phosphonates import ATP-binding protein PhnC (Nocardia farcinica (strain IFM 10152)).